An 806-amino-acid chain; its full sequence is Protein bimA (806 aa).

TPR repeat units lie at residues 76–109 (LGCS…WTSR) and 127–160 (AAVL…NPFM). Disordered stretches follow at residues 202–348 (VLPP…HRLG), 353–372 (TVSG…QGVG), and 401–460 (REVK…ASSK). The span at 224-237 (AGTTRSDSTSTHGS) shows a compositional bias: polar residues. Over residues 246–257 (GSTVSVASSGTG) the composition is skewed to low complexity. The bimA domain stretch occupies residues 260–399 (LPREGMETPG…ISSTALGVKE (140 aa)). The span at 328–348 (TKFESDEGHTERDAGMGHRLG) shows a compositional bias: basic and acidic residues. A compositionally biased stretch (polar residues) spans 408–421 (TTGNKARTTTSSNV). Positions 432-445 (HAGEIHDGDSKEYR) are enriched in basic and acidic residues. Over residues 446–459 (GTSSTSNGSQNASS) the composition is skewed to low complexity. TPR repeat units follow at residues 513–546 (PWVL…APSR), 581–614 (PEAW…DPHF), 616–648 (YGFT…DSRH), 649–682 (YNAW…NPSN), 684–716 (VLIC…APHS), and 751–784 (ANVH…DPKA).

This sequence belongs to the APC3/CDC27 family.

It localises to the nucleus. Functionally, required for the completion of mitosis in Aspergillus nidulans. The chain is Protein bimA (bimA) from Emericella nidulans (strain FGSC A4 / ATCC 38163 / CBS 112.46 / NRRL 194 / M139) (Aspergillus nidulans).